Here is a 140-residue protein sequence, read N- to C-terminus: FLYWCH family member 2 (140 aa).

2 disordered regions span residues 1-39 and 83-140; these read MPLP…PREF and THPE…GKSL. Serine 21 bears the Phosphoserine mark. Residues 98–114 are compositionally biased toward basic and acidic residues; sequence PEQKRSRQDPGADRTED. The segment covering 118–127 has biased composition (low complexity); sequence AAGPPEAAGE.

This is FLYWCH family member 2 (FLYWCH2) from Pongo abelii (Sumatran orangutan).